The chain runs to 184 residues: Mediator of RNA polymerase II transcription subunit 11 (184 aa).

The span at 142–152 shows a compositional bias: polar residues; it reads ATTKQETNINN. The tract at residues 142–184 is disordered; the sequence is ATTKQETNINNEDSEKEKQENITAIETKKESSENEDEDFDMIA. Residues 154–173 are compositionally biased toward basic and acidic residues; it reads DSEKEKQENITAIETKKESS. The span at 174–184 shows a compositional bias: acidic residues; the sequence is ENEDEDFDMIA.

It belongs to the Mediator complex subunit 11 family. In terms of assembly, component of the Mediator complex.

It localises to the nucleus. Component of the Mediator complex, a coactivator involved in the regulated transcription of nearly all RNA polymerase II-dependent genes. Mediator functions as a bridge to convey information from gene-specific regulatory proteins to the basal RNA polymerase II transcription machinery. Mediator is recruited to promoters by direct interactions with regulatory proteins and serves as a scaffold for the assembly of a functional pre-initiation complex with RNA polymerase II and the general transcription factors. This chain is Mediator of RNA polymerase II transcription subunit 11 (MED11), found in Debaryomyces hansenii (strain ATCC 36239 / CBS 767 / BCRC 21394 / JCM 1990 / NBRC 0083 / IGC 2968) (Yeast).